The primary structure comprises 223 residues: Endonuclease NucS (223 aa).

It belongs to the NucS endonuclease family.

The protein resides in the cytoplasm. Cleaves both 3' and 5' ssDNA extremities of branched DNA structures. The chain is Endonuclease NucS from Mycobacterium sp. (strain JLS).